Reading from the N-terminus, the 293-residue chain is D-alanine--D-alanine ligase (293 aa).

One can recognise an ATP-grasp domain in the interval 98 to 291 (KIIWEQHSLT…FNKLVTSIIN (194 aa)). Position 124 to 177 (124 to 177 (NFPLPWAVKPTLEGSSIGISKVDNQMQLNDALMLAWQYAPYALIEQWIKGDEYT)) interacts with ATP. Mg(2+)-binding residues include aspartate 245, glutamate 258, and asparagine 260.

This sequence belongs to the D-alanine--D-alanine ligase family. Mg(2+) is required as a cofactor. The cofactor is Mn(2+).

The protein localises to the cytoplasm. The enzyme catalyses 2 D-alanine + ATP = D-alanyl-D-alanine + ADP + phosphate + H(+). It functions in the pathway cell wall biogenesis; peptidoglycan biosynthesis. Its function is as follows. Cell wall formation. This is D-alanine--D-alanine ligase from Vesicomyosocius okutanii subsp. Calyptogena okutanii (strain HA).